Reading from the N-terminus, the 155-residue chain is 1,4-dihydroxy-2-naphthoyl-CoA hydrolase (155 aa).

The active site involves Asp-27.

It belongs to the 4-hydroxybenzoyl-CoA thioesterase family. DHNA-CoA hydrolase subfamily.

It catalyses the reaction 1,4-dihydroxy-2-naphthoyl-CoA + H2O = 1,4-dihydroxy-2-naphthoate + CoA + H(+). The protein operates within cofactor biosynthesis; phylloquinone biosynthesis. Its pathway is quinol/quinone metabolism; 1,4-dihydroxy-2-naphthoate biosynthesis; 1,4-dihydroxy-2-naphthoate from chorismate: step 7/7. Functionally, catalyzes the hydrolysis of 1,4-dihydroxy-2-naphthoyl-CoA (DHNA-CoA) to 1,4-dihydroxy-2-naphthoate (DHNA), a reaction involved in phylloquinone (vitamin K1) biosynthesis. The sequence is that of 1,4-dihydroxy-2-naphthoyl-CoA hydrolase from Prochlorococcus marinus (strain NATL2A).